Consider the following 302-residue polypeptide: Arginase (302 aa).

Residues H103, D126, H128, and D130 each coordinate Mn(2+). Substrate-binding positions include 128-132 (HGDLN), 139-141 (SGN), and D180. Mn(2+) contacts are provided by D229 and D231. Residues T243 and E274 each coordinate substrate.

This sequence belongs to the arginase family. Mn(2+) is required as a cofactor.

It catalyses the reaction L-arginine + H2O = urea + L-ornithine. The protein operates within nitrogen metabolism; urea cycle; L-ornithine and urea from L-arginine: step 1/1. In Staphylococcus aureus (strain MRSA252), this protein is Arginase (arg).